The sequence spans 99 residues: Late cornified envelope protein 4A (99 aa).

Positions 78–99 are disordered; sequence CYGSGSGQQSGGSGCCSGGGCC. The segment covering 81 to 99 has biased composition (gly residues); the sequence is SGSGQQSGGSGCCSGGGCC.

It belongs to the LCE family. As to quaternary structure, interacts with CYSRT1; the interaction is direct. As to expression, skin-specific. Expression was readily detected in adult trunk skin, adult arm skin, fetal skin, penal skin, vulva, esophagus and tongue. Not expressed in the cervix, rectum, lung, colon, or placenta.

Precursors of the cornified envelope of the stratum corneum. This Homo sapiens (Human) protein is Late cornified envelope protein 4A (LCE4A).